We begin with the raw amino-acid sequence, 208 residues long: Small ribosomal subunit protein uS4 (208 aa).

In terms of domain architecture, S4 RNA-binding spans 98–161 (RRLDNVIYRM…KELEIIKESL (64 aa)).

It belongs to the universal ribosomal protein uS4 family. Part of the 30S ribosomal subunit. Contacts protein S5. The interaction surface between S4 and S5 is involved in control of translational fidelity.

One of the primary rRNA binding proteins, it binds directly to 16S rRNA where it nucleates assembly of the body of the 30S subunit. In terms of biological role, with S5 and S12 plays an important role in translational accuracy. This Thermodesulfovibrio yellowstonii (strain ATCC 51303 / DSM 11347 / YP87) protein is Small ribosomal subunit protein uS4.